A 384-amino-acid chain; its full sequence is 1-deoxy-D-xylulose 5-phosphate reductoisomerase (384 aa).

Thr-10, Gly-11, Ser-12, Ile-13, Lys-37, and Asn-124 together coordinate NADPH. Lys-125 is a 1-deoxy-D-xylulose 5-phosphate binding site. Glu-126 lines the NADPH pocket. Asp-150 contributes to the Mn(2+) binding site. 1-deoxy-D-xylulose 5-phosphate-binding residues include Ser-151, Glu-152, Ser-176, and His-199. Mn(2+) is bound at residue Glu-152. Residue Gly-205 coordinates NADPH. 1-deoxy-D-xylulose 5-phosphate-binding residues include Ser-212, Asn-217, Lys-218, and Glu-221. Glu-221 contacts Mn(2+).

This sequence belongs to the DXR family. It depends on Mg(2+) as a cofactor. Mn(2+) serves as cofactor.

It catalyses the reaction 2-C-methyl-D-erythritol 4-phosphate + NADP(+) = 1-deoxy-D-xylulose 5-phosphate + NADPH + H(+). It participates in isoprenoid biosynthesis; isopentenyl diphosphate biosynthesis via DXP pathway; isopentenyl diphosphate from 1-deoxy-D-xylulose 5-phosphate: step 1/6. Functionally, catalyzes the NADPH-dependent rearrangement and reduction of 1-deoxy-D-xylulose-5-phosphate (DXP) to 2-C-methyl-D-erythritol 4-phosphate (MEP). This is 1-deoxy-D-xylulose 5-phosphate reductoisomerase from Clostridium tetani (strain Massachusetts / E88).